We begin with the raw amino-acid sequence, 212 residues long: Protein RER1C (212 aa).

The residue at position 1 (Met-1) is an N-acetylmethionine. The next 4 membrane-spanning stretches (helical) occupy residues 55–75 (TVPH…IYIV), 82–102 (GFYI…IAFL), 135–155 (EFKF…MTFF), and 157–177 (VFDV…LFFL).

This sequence belongs to the RER1 family.

It is found in the membrane. Functionally, involved in the retrieval of endoplasmic reticulum membrane proteins from the early Golgi compartment. The sequence is that of Protein RER1C (RER1C) from Arabidopsis thaliana (Mouse-ear cress).